Reading from the N-terminus, the 905-residue chain is Cation-transporting ATPase pma1 (905 aa).

4 helical membrane-spanning segments follow: residues 60–80 (FLLQ…TVKA), 81–101 (FLGS…NAII), 248–268 (FSHT…AVGW), and 283–303 (ALAV…TLAI). The active-site 4-aspartylphosphate intermediate is aspartate 333. 5 consecutive transmembrane segments (helical) span residues 716–736 (ILIS…VLWL), 774–794 (LLHR…GMFE), 809–829 (MAIQ…SQLG), 848–868 (ILLL…QLPF), and 880–900 (WQQW…AILA).

The protein belongs to the cation transport ATPase (P-type) (TC 3.A.3) family. Type IIA subfamily.

Its subcellular location is the cell membrane. It catalyses the reaction ATP + H2O = ADP + phosphate + H(+). In terms of biological role, could mediate calcium influx. This is Cation-transporting ATPase pma1 (pma1) from Synechocystis sp. (strain ATCC 27184 / PCC 6803 / Kazusa).